A 731-amino-acid polypeptide reads, in one-letter code: Gelsolin (731 aa).

The tract at residues 2–125 is actin-severing; it reads VVEHPEFLKA…YKKGGVASGF (124 aa). Residues 25–107 form a Gelsolin-like 1 repeat; the sequence is FDLVPVPPNL…VQGFESATFL (83 aa). Y35 is modified (phosphotyrosine). Residues G41, D42, E73, D85, G90, and A92 each coordinate Ca(2+). The tract at residues 72-75 is actin-actin interfilament contact point; it reads DESG. 111 to 118 is an a 1,2-diacyl-sn-glycero-3-phospho-(1D-myo-inositol-4,5-bisphosphate) binding site; it reads KSGLKYKK. Residue V121 coordinates Ca(2+). Residue 137–145 participates in a 1,2-diacyl-sn-glycero-3-phospho-(1D-myo-inositol-4,5-bisphosphate) binding; sequence RLLQVKGRR. The Gelsolin-like 2 repeat unit spans residues 147–219; it reads VRATEVPVSW…FEEGAEPEAM (73 aa). G162 and D163 together coordinate Ca(2+). Residues C164 and C177 are joined by a disulfide bond. Positions 185, 235, 278, 279, and 303 each coordinate Ca(2+). Residues 266-338 form a Gelsolin-like 3 repeat; sequence DENPFAQGAL…LPEGGETPLF (73 aa). A phosphotyrosine mark is found at Y358 and Y414. The interval 383–731 is actin-binding, Ca-sensitive; the sequence is AAQHGMDDDG…LDRALAELAA (349 aa). One copy of the Gelsolin-like 4 repeat lies at 404–485; it reads SNKVPVDPAT…VQGKEPAHLM (82 aa). Residues G420, D421, E451, D463, G468, P470, and T500 each contribute to the Ca(2+) site. N6-acetyllysine is present on K533. One copy of the Gelsolin-like 5 repeat lies at 533–591; sequence KAGALNSNDAFVLKTPSAAYLWVGAGASEAEKTGAQELLRVLRAQPVQVAEGSEPDSFW. Ca(2+) contacts are provided by N540 and D541. Residue Y552 is modified to Phosphotyrosine. A Ca(2+)-binding site is contributed by E563. Y600 carries the post-translational modification Phosphotyrosine. One copy of the Gelsolin-like 6 repeat lies at 630–705; that stretch reads IEEVPGEFMQ…VKQGFEPPSF (76 aa). The Ca(2+) site is built by D645, D646, and E668. T691 is subject to Phosphothreonine.

The protein belongs to the villin/gelsolin family. As to quaternary structure, binds to actin and to fibronectin. Identified in a complex composed of ACTA1, COBL, GSN and TMSB4X. Interacts with the inactive form of EIF2AK2/PKR. Interacts with FLII.

The protein resides in the cytoplasm. The protein localises to the cytoskeleton. Its function is as follows. Calcium-regulated, actin-modulating protein that binds to the plus (or barbed) ends of actin monomers or filaments, preventing monomer exchange (end-blocking or capping). It can promote the assembly of monomers into filaments (nucleation) as well as sever filaments already formed. Plays a role in ciliogenesis. The protein is Gelsolin (GSN) of Equus caballus (Horse).